The primary structure comprises 570 residues: Urease subunit alpha (570 aa).

The 436-residue stretch at 135-570 folds into the Urease domain; the sequence is GGLDIHVHFN…ELPLAQRYHL (436 aa). 3 residues coordinate Ni(2+): His140, His142, and Lys219. Lys219 carries the post-translational modification N6-carboxylysine. Residue His221 participates in substrate binding. Residues His248 and His274 each coordinate Ni(2+). The Proton donor role is filled by His322. Asp362 contributes to the Ni(2+) binding site.

It belongs to the metallo-dependent hydrolases superfamily. Urease alpha subunit family. Heterotrimer of UreA (gamma), UreB (beta) and UreC (alpha) subunits. Three heterotrimers associate to form the active enzyme. Ni cation serves as cofactor. In terms of processing, carboxylation allows a single lysine to coordinate two nickel ions.

It localises to the cytoplasm. It catalyses the reaction urea + 2 H2O + H(+) = hydrogencarbonate + 2 NH4(+). Its pathway is nitrogen metabolism; urea degradation; CO(2) and NH(3) from urea (urease route): step 1/1. The sequence is that of Urease subunit alpha from Natronomonas pharaonis (strain ATCC 35678 / DSM 2160 / CIP 103997 / JCM 8858 / NBRC 14720 / NCIMB 2260 / Gabara) (Halobacterium pharaonis).